Consider the following 228-residue polypeptide: Sugar fermentation stimulation protein homolog (228 aa).

Belongs to the SfsA family.

The sequence is that of Sugar fermentation stimulation protein homolog from Psychromonas ingrahamii (strain DSM 17664 / CCUG 51855 / 37).